We begin with the raw amino-acid sequence, 113 residues long: MFNWLNFFNFFFFFLFFVFLTTSFNFFCLVLTSELMWALLLLISAVLGSILDDFFLASFAFLLLGFASVELSIGLILMVYLKTTNLSLNLAAHKGSSYATLFLLKKGASKKKI.

It localises to the mitochondrion. This is an uncharacterized protein from Paramecium tetraurelia.